A 211-amino-acid chain; its full sequence is MRSLFFGIGKSIGNFFQIVKIWRNFFMTNTRKLAYIAILSAVSFLLLYFSFPLIPAADFLKVDFSILPVLIALVIFDFKSAIGVLLLRSLLKLLLNNGGPGSMIGLPMNFVALGVFVWGLSYFWKKNQTSKNYILGSVLGTILLTVAMVVLNYIYAVPLYAKFANFDIAQFIGLYKYLFAMVVPFNLLEGLIFSVAFALIYAPLKSILVKL.

The next 5 helical transmembrane spans lie at 34-54 (AYIA…FPLI), 66-86 (ILPV…GVLL), 104-124 (IGLP…SYFW), 134-154 (ILGS…LNYI), and 180-200 (AMVV…FALI).

It belongs to the prokaryotic riboflavin transporter (P-RFT) (TC 2.A.87) family. In terms of assembly, forms a stable energy-coupling factor (ECF) transporter complex composed of 2 membrane-embedded substrate-binding proteins (S component), 2 ATP-binding proteins (A component) and 2 transmembrane proteins (T component) upon coexpression of the 4 components in E.coli.

The protein localises to the cell membrane. Functionally, substrate-binding (S) component of an energy-coupling factor (ECF) ABC-transporter complex. Mediates riboflavin uptake, may also transport FMN and roseoflavin. Probably a riboflavin-binding protein that interacts with the energy-coupling factor (ECF) ABC-transporter complex. Unlike classic ABC transporters this ECF transporter provides the energy necessary to transport a number of different substrates. The substrates themselves are bound by transmembrane, not extracytoplasmic soluble proteins. Expression of the complex plus RibU in E.coli allows riboflavin uptake. The polypeptide is Riboflavin transporter RibU (ribU) (Streptococcus thermophilus (strain ATCC BAA-250 / LMG 18311)).